The primary structure comprises 447 residues: Chromosomal replication initiator protein DnaA (447 aa).

Residues 1–66 are domain I, interacts with DnaA modulators; it reads MSNRIISILK…SKAIKEAYGK (66 aa). The domain II stretch occupies residues 66 to 102; it reads KNLDYEIVYETTEPEAFNKSNESYKGPLVKKKPLLIS. Positions 103–319 are domain III, AAA+ region; the sequence is NLNANYTFEN…GVIIKLIVQS (217 aa). Residues Gly-146, Gly-148, Lys-149, and Thr-150 each coordinate ATP. A domain IV, binds dsDNA region spans residues 320-447; sequence SINKERIGAA…NTMATSSAAG (128 aa).

Belongs to the DnaA family. Oligomerizes as a right-handed, spiral filament on DNA at oriC.

The protein resides in the cytoplasm. Its function is as follows. Plays an essential role in the initiation and regulation of chromosomal replication. ATP-DnaA binds to the origin of replication (oriC) to initiate formation of the DNA replication initiation complex once per cell cycle. Binds the DnaA box (a 9 base pair repeat at the origin) and separates the double-stranded (ds)DNA. Forms a right-handed helical filament on oriC DNA; dsDNA binds to the exterior of the filament while single-stranded (ss)DNA is stabiized in the filament's interior. The ATP-DnaA-oriC complex binds and stabilizes one strand of the AT-rich DNA unwinding element (DUE), permitting loading of DNA polymerase. After initiation quickly degrades to an ADP-DnaA complex that is not apt for DNA replication. Binds acidic phospholipids. The chain is Chromosomal replication initiator protein DnaA from Kosmotoga olearia (strain ATCC BAA-1733 / DSM 21960 / TBF 19.5.1).